Consider the following 178-residue polypeptide: ATP-dependent protease subunit HslV (178 aa).

Residue Thr5 is part of the active site. Residues Gly161, Cys164, and Thr167 each coordinate Na(+).

This sequence belongs to the peptidase T1B family. HslV subfamily. A double ring-shaped homohexamer of HslV is capped on each side by a ring-shaped HslU homohexamer. The assembly of the HslU/HslV complex is dependent on binding of ATP.

It is found in the cytoplasm. The enzyme catalyses ATP-dependent cleavage of peptide bonds with broad specificity.. With respect to regulation, allosterically activated by HslU binding. Functionally, protease subunit of a proteasome-like degradation complex believed to be a general protein degrading machinery. In Aliarcobacter butzleri (strain RM4018) (Arcobacter butzleri), this protein is ATP-dependent protease subunit HslV.